The chain runs to 709 residues: Elongation factor G (709 aa).

The 286-residue stretch at 10-295 (NQIRNIGIMA…AVVDYLPSPE (286 aa)) folds into the tr-type G domain. GTP contacts are provided by residues 19 to 26 (AHIDAGKT), 91 to 95 (DTPGH), and 145 to 148 (NKMD).

It belongs to the TRAFAC class translation factor GTPase superfamily. Classic translation factor GTPase family. EF-G/EF-2 subfamily.

The protein localises to the cytoplasm. Catalyzes the GTP-dependent ribosomal translocation step during translation elongation. During this step, the ribosome changes from the pre-translocational (PRE) to the post-translocational (POST) state as the newly formed A-site-bound peptidyl-tRNA and P-site-bound deacylated tRNA move to the P and E sites, respectively. Catalyzes the coordinated movement of the two tRNA molecules, the mRNA and conformational changes in the ribosome. The sequence is that of Elongation factor G from Bifidobacterium adolescentis (strain ATCC 15703 / DSM 20083 / NCTC 11814 / E194a).